The chain runs to 287 residues: Shikimate dehydrogenase (NADP(+)) (287 aa).

Residues 21-23 (SKS) and Thr-68 contribute to the shikimate site. Catalysis depends on Lys-72, which acts as the Proton acceptor. 2 residues coordinate shikimate: Asn-93 and Asp-109. Residues 133–137 (GAGGA), 157–162 (NRTQTK), and Met-226 each bind NADP(+). Shikimate is bound at residue Tyr-228. Gly-250 provides a ligand contact to NADP(+).

It belongs to the shikimate dehydrogenase family. In terms of assembly, homodimer.

The catalysed reaction is shikimate + NADP(+) = 3-dehydroshikimate + NADPH + H(+). Its pathway is metabolic intermediate biosynthesis; chorismate biosynthesis; chorismate from D-erythrose 4-phosphate and phosphoenolpyruvate: step 4/7. Its function is as follows. Involved in the biosynthesis of the chorismate, which leads to the biosynthesis of aromatic amino acids. Catalyzes the reversible NADPH linked reduction of 3-dehydroshikimate (DHSA) to yield shikimate (SA). The sequence is that of Shikimate dehydrogenase (NADP(+)) from Shewanella oneidensis (strain ATCC 700550 / JCM 31522 / CIP 106686 / LMG 19005 / NCIMB 14063 / MR-1).